A 453-amino-acid chain; its full sequence is MPKGFLVKRNKKAALVSYRIRTDEDGGPTPECPIAQIALSSPAPSASKPDSILLAFPSAGAEAPVPVHKPVQFGNPEAVYQALYSPTRPVSKDHDRKYFERSLNLGSPISAESFPTPASLTSLDHHLLFAPVDLKIGTSNSNRSGTASGAHAPAIQTGAKRPSADAAERKVSSKSAKKPKAIRKLNFEDEVTTSPVLGLKIKEGPVDLKPRPSSGGTNKPLGEFICQLCKEEYSDPFSLAQHKCSRIVRVEYRCPECEKVFSCPANLASHRRWHKPRVQSAPKQALQPAKPFPEELRAEFPSDRDTPSPGLSESGSEDGLYDCQHCGKRFKRQAYLRKHILGHQALQNQILGEAFRSAESPDAMPSEDRQSPAPLNLSPADCLTCPACGEKLPNRASLERHLRLLHDDAQAFPCKFCPATFYSSPGLTRHINKCHPTENRQVILLQMPVRNAC.

An SNAG domain region spans residues 1 to 20; that stretch reads MPKGFLVKRNKKAALVSYRI. The segment at 140–179 is disordered; it reads NSNRSGTASGAHAPAIQTGAKRPSADAAERKVSSKSAKKP. The span at 162-171 shows a compositional bias: basic and acidic residues; the sequence is PSADAAERKV. A C2H2-type 1 zinc finger spans residues 252–274; it reads YRCPECEKVFSCPANLASHRRWH. A disordered region spans residues 298 to 318; that stretch reads AEFPSDRDTPSPGLSESGSED. 3 consecutive C2H2-type zinc fingers follow at residues 321 to 343, 383 to 406, and 412 to 435; these read YDCQ…ILGH, LTCP…RLLH, and FPCK…NKCH.

Belongs to the INSM1 family.

Its subcellular location is the nucleus. Its function is as follows. May act as a transcriptional regulator. May play a role in neurogenesis and neuroendocrine cell differentiation during embryonic development. In Danio rerio (Zebrafish), this protein is Insulinoma-associated protein 1b (insm1b).